An 806-amino-acid polypeptide reads, in one-letter code: Ankyrin repeat, bromo and BTB domain-containing protein DDB_G0293800 (806 aa).

5 ANK repeats span residues 1–30 (MSNK…DVNQ), 34–63 (SNRY…LVNC), 67–96 (RGAT…DVNC), 100–130 (AGST…DVNL), and 134–163 (EGST…RADV). The segment covering 210–228 (GVGKKEDDDNNMKIDKQES) has biased composition (basic and acidic residues). Residues 210–231 (GVGKKEDDDNNMKIDKQESEQQ) are disordered. One can recognise a BTB domain in the interval 239–307 (SDITFLIENQ…IYTGSIEKFE (69 aa)). Disordered stretches follow at residues 423-517 (TRTA…SDSM) and 621-743 (QNFP…EERR). 2 stretches are compositionally biased toward low complexity: residues 426–436 (ANANASNSNQS) and 443–511 (TSTT…SSSS). Residues 516 to 622 (SMNEKNLTFC…NAFDQKFLQN (107 aa)) enclose the Bromo domain. A compositionally biased stretch (pro residues) spans 626–641 (EKPPTYKPPPPTPTPI). Low complexity predominate over residues 642–658 (PTQQQQQQSTSSTSTPT). Residues 666–675 (DEHVKVKEDT) show a composition bias toward basic and acidic residues. The span at 676–693 (NSAQPTSSSSNHTNGENA) shows a compositional bias: polar residues. A compositionally biased stretch (low complexity) spans 694-733 (SSSSSSSSSKQSNNNNNNNNNNNSNSTTNSSSSSSSTTTT). Residues 727 to 806 (SSSTTTTQKK…ECFKKQKQDE (80 aa)) form the NET domain.

This chain is Ankyrin repeat, bromo and BTB domain-containing protein DDB_G0293800, found in Dictyostelium discoideum (Social amoeba).